Reading from the N-terminus, the 241-residue chain is Protein TraL (241 aa).

It to plasmid R751 TraL.

This is Protein TraL (traL) from Escherichia coli.